The primary structure comprises 342 residues: UDP-N-acetylglucosamine--N-acetylmuramyl-(pentapeptide) pyrophosphoryl-undecaprenol N-acetylglucosamine transferase (342 aa).

UDP-N-acetyl-alpha-D-glucosamine-binding positions include 10 to 12 (TGG), Asn-124, Ser-177, and Gln-275.

This sequence belongs to the glycosyltransferase 28 family. MurG subfamily.

It localises to the cell inner membrane. The catalysed reaction is di-trans,octa-cis-undecaprenyl diphospho-N-acetyl-alpha-D-muramoyl-L-alanyl-D-glutamyl-meso-2,6-diaminopimeloyl-D-alanyl-D-alanine + UDP-N-acetyl-alpha-D-glucosamine = di-trans,octa-cis-undecaprenyl diphospho-[N-acetyl-alpha-D-glucosaminyl-(1-&gt;4)]-N-acetyl-alpha-D-muramoyl-L-alanyl-D-glutamyl-meso-2,6-diaminopimeloyl-D-alanyl-D-alanine + UDP + H(+). It participates in cell wall biogenesis; peptidoglycan biosynthesis. Its function is as follows. Cell wall formation. Catalyzes the transfer of a GlcNAc subunit on undecaprenyl-pyrophosphoryl-MurNAc-pentapeptide (lipid intermediate I) to form undecaprenyl-pyrophosphoryl-MurNAc-(pentapeptide)GlcNAc (lipid intermediate II). This is UDP-N-acetylglucosamine--N-acetylmuramyl-(pentapeptide) pyrophosphoryl-undecaprenol N-acetylglucosamine transferase from Campylobacter jejuni (strain RM1221).